The following is a 403-amino-acid chain: D-galactonate dehydratase family member Mmwyl1_0037 (403 aa).

Substrate is bound by residues Asn-37 and His-122. Tyr-159 serves as the catalytic Proton donor/acceptor. Asp-211 contacts Mg(2+). His-213 (proton donor/acceptor) is an active-site residue. 2 residues coordinate Mg(2+): Glu-237 and Glu-263. Positions 263, 284, 313, 317, and 340 each coordinate substrate.

It belongs to the mandelate racemase/muconate lactonizing enzyme family. GalD subfamily. Mg(2+) is required as a cofactor.

The enzyme catalyses D-mannonate = 2-dehydro-3-deoxy-D-gluconate + H2O. Its function is as follows. Has low D-mannonate dehydratase activity (in vitro), suggesting that this is not a physiological substrate and that it has no significant role in D-mannonate degradation in vivo. Has no detectable activity with a panel of 70 other acid sugars (in vitro). The sequence is that of D-galactonate dehydratase family member Mmwyl1_0037 from Marinomonas sp. (strain MWYL1).